The chain runs to 201 residues: Retinol-binding protein 4 (201 aa).

The signal sequence occupies residues 1 to 18 (MEWVWALVVLAALGSAGA). Disulfide bonds link Cys-22–Cys-178, Cys-88–Cys-192, and Cys-138–Cys-147. Gln-116 serves as a coordination point for substrate. Arg-139 is modified (omega-N-methylarginine).

The protein belongs to the calycin superfamily. Lipocalin family. Interacts with TTR. Interaction with TTR prevents its loss by filtration through the kidney glomeruli. Interacts with STRA6.

The protein localises to the secreted. Its function is as follows. Retinol-binding protein that mediates retinol transport in blood plasma. Delivers retinol from the liver stores to the peripheral tissues. Transfers the bound all-trans retinol to STRA6, that then facilitates retinol transport across the cell membrane. This is Retinol-binding protein 4 (RBP4) from Equus caballus (Horse).